A 380-amino-acid polypeptide reads, in one-letter code: MTDSLHNAPIVLDNGSGTIRAGFAGDDVPKCHFPSFVGRPKHLRVLAGALEGEVFIGQKAASELRGLLKIRYPLEHGIVTDWDDMEKIWAYVYDEGLKTLSEEHPVLLTEPPLNPRANRDTAAQILFETFNVPALYTSIQAVLSLYASGRTTGVVLDSGDGVSHAVPVYQGFTVPNSIRRIDVAGRDVTEYLQTLLRKSGYVFHTSAEKEVVRLIKESVTYVAHDPRKEEKEWAAAKMDPAKIAEYVLPDGNKLKIGAERFRAPEILFDPEIIGLEYPGVHQIVVDSINRTDLDLRRDLYSNIVLSGGSTLTKGFGDRLLTEVQKLAVKDMRIKIFAPPERKYSTWIGGSILAGLSTFRKMWVSIDDWHENPDIIHTKFT.

It belongs to the actin family. ARP1 subfamily.

It is found in the cytoplasm. The protein localises to the cytoskeleton. Involved in nuclear migration. May function as a component of the dynactin complex which activates force generation by cytoplasmic dynein. This is Actin-like protein (ro-4) from Neurospora crassa (strain ATCC 24698 / 74-OR23-1A / CBS 708.71 / DSM 1257 / FGSC 987).